The primary structure comprises 6995 residues: Fibrous sheath-interacting protein 2 (6995 aa).

Disordered stretches follow at residues E273 to Q292, D308 to K336, and G351 to P476. Over residues T359–S396 the composition is skewed to polar residues. The span at E397–R421 shows a compositional bias: basic and acidic residues. A compositionally biased stretch (polar residues) spans I424–L442. Phosphoserine is present on S430. Positions D443–K452 are enriched in basic and acidic residues. Residues S453 to S463 show a composition bias toward polar residues. The stretch at L665–K692 forms a coiled coil. Disordered regions lie at residues P1452–T1472, K2554–M2595, T2699–V2731, P3182–T3270, G5489–G5665, S5719–K5740, K5823–K5878, K5943–L5996, and S6973–R6995. Residues S2555–S2565 show a composition bias toward basic and acidic residues. Residues P3187–V3204 show a composition bias toward polar residues. The segment covering S3220 to S3231 has biased composition (low complexity). Residues C3232 to A3250 are compositionally biased toward polar residues. The span at S3255 to R3265 shows a compositional bias: basic residues. A compositionally biased stretch (basic and acidic residues) spans D5496–T5509. 3 stretches are compositionally biased toward polar residues: residues M5523–T5557, Q5565–M5625, and V5638–K5650. Composition is skewed to basic and acidic residues over residues S5719–T5738 and G5829–S5877. The segment covering S5982–P5993 has biased composition (polar residues). Residues S6977–R6995 are compositionally biased toward low complexity.

In terms of assembly, may interact with AKAP4. Predominantly expressed in testis.

Functionally, plays a role in spermatogenesis. The polypeptide is Fibrous sheath-interacting protein 2 (Fsip2) (Mus musculus (Mouse)).